We begin with the raw amino-acid sequence, 399 residues long: [Pyruvate dehydrogenase (acetyl-transferring)] kinase, mitochondrial (399 aa).

The transit peptide at 1 to 18 (MFLTRRLLGPFTSAIARK) directs the protein to the mitochondrion. The Histidine kinase domain maps to 123-360 (VVETMAEGLI…DAMIFLKAIP (238 aa)). ATP-binding positions include 247-254 (ELFKNSMR), Asp-286, 305-306 (ST), and 321-326 (GYGYGL).

The protein belongs to the PDK/BCKDK protein kinase family.

The protein localises to the mitochondrion matrix. The catalysed reaction is L-seryl-[pyruvate dehydrogenase E1 alpha subunit] + ATP = O-phospho-L-seryl-[pyruvate dehydrogenase E1 alpha subunit] + ADP + H(+). Its function is as follows. Inhibits the mitochondrial pyruvate dehydrogenase complex by phosphorylation of the E1 alpha subunit, thus contributing to the regulation of glucose metabolism. The chain is [Pyruvate dehydrogenase (acetyl-transferring)] kinase, mitochondrial from Ascaris suum (Pig roundworm).